The chain runs to 422 residues: MLYYLFEWLHKLNFPGAGMFGYTSFRALMAVILALLISSIWGDKFINLLKKKQITETQRDAKTDPFGVNKVGVPSMGGVIIIVAILIPCLLLGKLDNIYMILMLITTVWLGSLGFADDYIKIFKKDKEGLHGKFKIIGQVGLGLIVGLTLYLSPDVVIRENIEVHTPGQEMEVIHGTNDLKSTQTTIPFFKSNNLDYADLVGFMGEHAQTAGWFLFVIITIFVVTAVSNGANLNDGMDGMAAGNSAIIGATLGILAYVSSHIEFASYLNIMYIPGSEELVIYICAFIGALIGFLWYNAYPAQVFMGDTGSLTIGGIIAVFAIIIHKELLIPILCGVFLVENLSVILQRFYYKIGKRKGVKQRLFKRTPIHDHFRTSMSLVEPGCTVKFTKPDQLFHESKITVRFWIVTIVLAAITIITLKIR.

9 helical membrane-spanning segments follow: residues Leu28–Leu48, Val71–Leu91, Leu95–Phe115, Ile136–Val156, Ala211–Ala231, Gly239–Ser259, Leu279–Tyr299, Ile313–Leu333, and Lys399–Leu419.

It belongs to the glycosyltransferase 4 family. MraY subfamily. Requires Mg(2+) as cofactor.

The protein resides in the cell inner membrane. It catalyses the reaction UDP-N-acetyl-alpha-D-muramoyl-L-alanyl-gamma-D-glutamyl-meso-2,6-diaminopimeloyl-D-alanyl-D-alanine + di-trans,octa-cis-undecaprenyl phosphate = di-trans,octa-cis-undecaprenyl diphospho-N-acetyl-alpha-D-muramoyl-L-alanyl-D-glutamyl-meso-2,6-diaminopimeloyl-D-alanyl-D-alanine + UMP. It participates in cell wall biogenesis; peptidoglycan biosynthesis. Its function is as follows. Catalyzes the initial step of the lipid cycle reactions in the biosynthesis of the cell wall peptidoglycan: transfers peptidoglycan precursor phospho-MurNAc-pentapeptide from UDP-MurNAc-pentapeptide onto the lipid carrier undecaprenyl phosphate, yielding undecaprenyl-pyrophosphoryl-MurNAc-pentapeptide, known as lipid I. This Bacteroides thetaiotaomicron (strain ATCC 29148 / DSM 2079 / JCM 5827 / CCUG 10774 / NCTC 10582 / VPI-5482 / E50) protein is Phospho-N-acetylmuramoyl-pentapeptide-transferase.